Here is a 455-residue protein sequence, read N- to C-terminus: Kynurenine 3-monooxygenase (455 aa).

The protein belongs to the aromatic-ring hydroxylase family. KMO subfamily. FAD is required as a cofactor.

The catalysed reaction is L-kynurenine + NADPH + O2 + H(+) = 3-hydroxy-L-kynurenine + NADP(+) + H2O. The protein operates within cofactor biosynthesis; NAD(+) biosynthesis; quinolinate from L-kynurenine: step 1/3. In terms of biological role, catalyzes the hydroxylation of L-kynurenine (L-Kyn) to form 3-hydroxy-L-kynurenine (L-3OHKyn). Required for synthesis of quinolinic acid. This chain is Kynurenine 3-monooxygenase, found in Xanthomonas axonopodis pv. citri (strain 306).